Consider the following 78-residue polypeptide: MDNIVERVKKIVAEQLGVNEADIKNESSFVDDLGADSLDTVELVMALEEEFECEIPDDQAEKITTVQQAVDYILAGKK.

Residues 2–77 (DNIVERVKKI…QAVDYILAGK (76 aa)) enclose the Carrier domain. Ser-37 bears the O-(pantetheine 4'-phosphoryl)serine mark.

The protein belongs to the acyl carrier protein (ACP) family. 4'-phosphopantetheine is transferred from CoA to a specific serine of apo-ACP by AcpS. This modification is essential for activity because fatty acids are bound in thioester linkage to the sulfhydryl of the prosthetic group.

It is found in the cytoplasm. The protein operates within lipid metabolism; fatty acid biosynthesis. In terms of biological role, carrier of the growing fatty acid chain in fatty acid biosynthesis. This chain is Acyl carrier protein, found in Dechloromonas aromatica (strain RCB).